A 923-amino-acid polypeptide reads, in one-letter code: Protein translocase subunit SecA (923 aa).

Residues Gln-86, 104-108 (GEGKT), and Asp-512 each bind ATP. 4 residues coordinate Zn(2+): Cys-906, Cys-908, Cys-917, and His-918.

Belongs to the SecA family. In terms of assembly, monomer and homodimer. Part of the essential Sec protein translocation apparatus which comprises SecA, SecYEG and auxiliary proteins SecDF-YajC and YidC. The cofactor is Zn(2+).

The protein resides in the cell inner membrane. It localises to the cytoplasm. The enzyme catalyses ATP + H2O + cellular proteinSide 1 = ADP + phosphate + cellular proteinSide 2.. Its function is as follows. Part of the Sec protein translocase complex. Interacts with the SecYEG preprotein conducting channel. Has a central role in coupling the hydrolysis of ATP to the transfer of proteins into and across the cell membrane, serving both as a receptor for the preprotein-SecB complex and as an ATP-driven molecular motor driving the stepwise translocation of polypeptide chains across the membrane. This is Protein translocase subunit SecA from Caulobacter vibrioides (strain ATCC 19089 / CIP 103742 / CB 15) (Caulobacter crescentus).